A 116-amino-acid chain; its full sequence is MVSRKAVAVLLMVHVAVMLASQTEAFVPIFTHSELQRIREKERNKGQKKSLIVQQRSEEVGPLDPVEPPEEEENEVIKLTAPVAIGTRMNSRQLEKYRAALEGLLSEVLLPARNDK.

Residues 1-25 (MVSRKAVAVLLMVHVAVMLASQTEA) form the signal peptide. Residues 39 to 74 (REKERNKGQKKSLIVQQRSEEVGPLDPVEPPEEEEN) are disordered.

Belongs to the motilin family.

It is found in the secreted. Plays an important role in the regulation of interdigestive gastrointestinal motility and indirectly causes rhythmic contraction of duodenal and colonic smooth muscle. In Felis catus (Cat), this protein is Promotilin (MLN).